The chain runs to 555 residues: WRKY transcription factor WRKY24 (555 aa).

Disordered stretches follow at residues 38–65 (GGGG…PSSF) and 132–248 (QTAP…CTFP). The segment covering 51-61 (PSLPLSPPPVS) has biased composition (pro residues). The segment covering 163-194 (QQQQQPWGYQQQPAGMDAGANAASFGAAPFQA) has biased composition (low complexity). Positions 214 to 278 (SQRRSSDDGY…YKGTHNHAKP (65 aa)) form a DNA-binding region, WRKY 1. The short motif at 253 to 259 (KKKVERS) is the Nuclear localization signal element. The segment at 270-367 (KGTHNHAKPQ…EGISMAGNRT (98 aa)) is disordered. Composition is skewed to polar residues over residues 277 to 294 (KPQN…QVLQ) and 310 to 320 (TAATPENSSAS). The segment covering 347-356 (DSKRWRKDGD) has biased composition (basic and acidic residues). Positions 379-444 (SDIDILDDGY…YEGKHNHDVP (66 aa)) form a DNA-binding region, WRKY 2. Residues 466–555 (HPYLPNQPPP…DDMFFQNSLY (90 aa)) are transcription repression of gibberellic acid (GA)-induced promoters. Disordered regions lie at residues 471–498 (NQPP…GQGP) and 513–555 (GFDD…NSLY).

This sequence belongs to the WRKY group II-a family. Expressed in aleurone cells. Mostly expressed in aleurone layers and leaves, and, to a lower extent, in roots, panicles and embryos.

Its subcellular location is the nucleus. Functionally, transcription repressor. Interacts specifically with the W box (5'-(T)TGAC[CT]-3'), a frequently occurring elicitor-responsive cis-acting element. Negative regulator of both gibberellic acid (GA) and abscisic acid (ABA) signaling in aleurone cells, probably by interfering with GAM1, via the specific repression of GA- and ABA-induced promoters. The polypeptide is WRKY transcription factor WRKY24 (Oryza sativa subsp. indica (Rice)).